The sequence spans 490 residues: Aspartyl/glutamyl-tRNA(Asn/Gln) amidotransferase subunit B (490 aa).

The protein belongs to the GatB/GatE family. GatB subfamily. In terms of assembly, heterotrimer of A, B and C subunits.

It carries out the reaction L-glutamyl-tRNA(Gln) + L-glutamine + ATP + H2O = L-glutaminyl-tRNA(Gln) + L-glutamate + ADP + phosphate + H(+). The catalysed reaction is L-aspartyl-tRNA(Asn) + L-glutamine + ATP + H2O = L-asparaginyl-tRNA(Asn) + L-glutamate + ADP + phosphate + 2 H(+). Allows the formation of correctly charged Asn-tRNA(Asn) or Gln-tRNA(Gln) through the transamidation of misacylated Asp-tRNA(Asn) or Glu-tRNA(Gln) in organisms which lack either or both of asparaginyl-tRNA or glutaminyl-tRNA synthetases. The reaction takes place in the presence of glutamine and ATP through an activated phospho-Asp-tRNA(Asn) or phospho-Glu-tRNA(Gln). This Prochlorococcus marinus (strain AS9601) protein is Aspartyl/glutamyl-tRNA(Asn/Gln) amidotransferase subunit B.